A 114-amino-acid chain; its full sequence is Ribonuclease P protein component (114 aa).

This sequence belongs to the RnpA family. Consists of a catalytic RNA component (M1 or rnpB) and a protein subunit.

It carries out the reaction Endonucleolytic cleavage of RNA, removing 5'-extranucleotides from tRNA precursor.. RNaseP catalyzes the removal of the 5'-leader sequence from pre-tRNA to produce the mature 5'-terminus. It can also cleave other RNA substrates such as 4.5S RNA. The protein component plays an auxiliary but essential role in vivo by binding to the 5'-leader sequence and broadening the substrate specificity of the ribozyme. The protein is Ribonuclease P protein component of Borrelia hermsii (strain HS1 / DAH).